The following is a 262-amino-acid chain: tRNA pseudouridine synthase A (262 aa).

Asp51 acts as the Nucleophile in catalysis. Residue Tyr109 participates in substrate binding.

This sequence belongs to the tRNA pseudouridine synthase TruA family. Homodimer.

It catalyses the reaction uridine(38/39/40) in tRNA = pseudouridine(38/39/40) in tRNA. Formation of pseudouridine at positions 38, 39 and 40 in the anticodon stem and loop of transfer RNAs. This is tRNA pseudouridine synthase A from Aliivibrio fischeri (strain ATCC 700601 / ES114) (Vibrio fischeri).